The primary structure comprises 336 residues: tRNA N6-adenosine threonylcarbamoyltransferase (336 aa).

Positions 111 and 115 each coordinate Fe cation. Residues 134 to 138, Asp167, Gly180, Asp184, and Asn272 each bind substrate; that span reads VVSGG. Fe cation is bound at residue Asp300.

Belongs to the KAE1 / TsaD family. Requires Fe(2+) as cofactor.

The protein resides in the cytoplasm. It catalyses the reaction L-threonylcarbamoyladenylate + adenosine(37) in tRNA = N(6)-L-threonylcarbamoyladenosine(37) in tRNA + AMP + H(+). Required for the formation of a threonylcarbamoyl group on adenosine at position 37 (t(6)A37) in tRNAs that read codons beginning with adenine. Is involved in the transfer of the threonylcarbamoyl moiety of threonylcarbamoyl-AMP (TC-AMP) to the N6 group of A37, together with TsaE and TsaB. TsaD likely plays a direct catalytic role in this reaction. This Caldicellulosiruptor bescii (strain ATCC BAA-1888 / DSM 6725 / KCTC 15123 / Z-1320) (Anaerocellum thermophilum) protein is tRNA N6-adenosine threonylcarbamoyltransferase.